The chain runs to 490 residues: Cytochrome P450 90D2 (490 aa).

The chain crosses the membrane as a helical span at residues 4-24; it reads AAAGWAAPAFAVAAVVIWVVL. A heme-binding site is contributed by cysteine 437.

The protein belongs to the cytochrome P450 family. Requires heme as cofactor.

The protein resides in the membrane. The enzyme catalyses 6-deoxoteasterone + reduced [NADPH--hemoprotein reductase] + O2 = 3-dehydro-6-deoxoteasterone + oxidized [NADPH--hemoprotein reductase] + 2 H2O + H(+). It functions in the pathway plant hormone biosynthesis; brassinosteroid biosynthesis. In terms of biological role, catalyzes the C6-oxidation step in brassinosteroids biosynthesis. May convert 6-deoxoteasterone (6-deoxoTE) to 3-dehydro-6-deoxoteasterone (6-deoxo3DT, 6-deoxo3DHT), and teasterone (TE) to 3-dehydroteasterone (3DT, 3-DHT). Involved in the elongation of leaf sheaths and stems. The sequence is that of Cytochrome P450 90D2 from Oryza sativa subsp. indica (Rice).